Reading from the N-terminus, the 539-residue chain is MTDWLDHLLILPILLPLAVAAVLIPINERDRTLKGAIGFASTLVVFILSMILMRLAAAGTGSLPGSGVYQLGNWPAPFGIVLVLDRLSALMLCLTSGLALAAQAYSMARWHTAGHHFHSLFQLLVAGLNGAFLTGDLFNLFVFFEMMLAASYGLLLHGSGPLRVKAGLHYIAVNLAASALFLIGVSLIYGAAGTLNMADLATKLAALEPRSRTLVEMGSAILGVAFLVKAGMWPLSFWLPTAYAAATPPVAGVFAVLTKVGIYVIIRLHLLVFGTAAGASSGFGQEWLVTGGMLTIAFGGIGVLASQAMGRLAGYSVLVSSGTLLAAVGLGHDGMLAGALFYLVSSTLTIGAFFLLIELVERGRDAGADVLAVTMEAYGDFDEDEEEEEVGAAIPGTMAVLGLCFCLCALLLAGLPPLSGFIAKFALISGLFDMPAAELATAMSAADWTYVTLLILSGLAAMIAMNRIGIRTFWASIEGTIPRVVVIEITPVVVLLGACIFLSLQAGPAMRYMQATADDLLAPLTHSERVLSAPRAGSQ.

Helical transmembrane passes span 4–23, 36–58, 78–100, 113–135, 140–162, 175–197, 217–239, 251–273, 283–305, 312–331, 335–357, 400–422, 442–464, and 484–506; these read WLDH…AAVL, AIGF…LAAA, FGIV…GLAL, AGHH…FLTG, LFVF…SGPL, LAAS…TLNM, MGSA…SFWL, AGVF…LLVF, FGQE…GVLA, LAGY…VGLG, MLAG…FLLI, VLGL…SGFI, AMSA…AMIA, and VVVI…SLQA.

It belongs to the CPA3 antiporters (TC 2.A.63) subunit D family. May form a hetero-oligomeric complex that consists of six subunits: PhaAB, PhaC, PhaD, PhaE, PhaF and PhaG.

It is found in the cell membrane. Functionally, part of a K(+) efflux system which is required for the adaptation of R.meliloti to alkaline pH as well as for the infection process during symbiotic nodule development. The sequence is that of Probable K(+)/H(+) antiporter subunit D (phaD) from Rhizobium meliloti (strain 1021) (Ensifer meliloti).